An 867-amino-acid chain; its full sequence is Inactive tyrosine-protein kinase kin-32 (867 aa).

Residues 3–327 form the FERM domain; that stretch reads GLARVFLIGG…GYQMLYNQRD (325 aa). The region spanning 367–631 is the Protein kinase domain; that stretch reads ITLKELIGGG…IIEDVRQQII (265 aa). ATP-binding positions include 373-381 and Lys-400; that span reads IGGGQFGNV. Residues 662–691 are a coiled coil; it reads TLYRTMEDQKRQAEEDAKWLEQEDDEDEDD. The segment at 674-729 is disordered; it reads AEEDAKWLEQEDDEDEDDQDIDQIPSTSHSSVENIRTSNGYLHHTPTSTRSLRFED. Positions 683–694 are enriched in acidic residues; that stretch reads QEDDEDEDDQDI. The segment covering 698–724 has biased composition (polar residues); that stretch reads PSTSHSSVENIRTSNGYLHHTPTSTRS.

Belongs to the protein kinase superfamily. Tyr protein kinase family. FAK subfamily. Expressed in body wall muscles and some neurons in the head.

In terms of biological role, has apparently no tyrosine kinase activity in vitro when expressed in mammalian cells. This is Inactive tyrosine-protein kinase kin-32 from Caenorhabditis elegans.